The following is a 120-amino-acid chain: Probable early E4 13 kDa protein (120 aa).

This is Probable early E4 13 kDa protein from Human adenovirus A serotype 12 (HAdV-12).